We begin with the raw amino-acid sequence, 243 residues long: Probable transcriptional regulatory protein LGAS_1276 (243 aa).

The interval 1 to 22 (MSGHSKWHNIQGRKNAQDAKRG) is disordered.

Belongs to the TACO1 family.

Its subcellular location is the cytoplasm. The chain is Probable transcriptional regulatory protein LGAS_1276 from Lactobacillus gasseri (strain ATCC 33323 / DSM 20243 / BCRC 14619 / CIP 102991 / JCM 1131 / KCTC 3163 / NCIMB 11718 / NCTC 13722 / AM63).